We begin with the raw amino-acid sequence, 404 residues long: tRNA-specific 2-thiouridylase MnmA (404 aa).

ATP is bound by residues Gly42–Ser49 and Leu68. Cys129 (nucleophile) is an active-site residue. A disulfide bridge links Cys129 with Cys239. Gly154 is an ATP binding site. Positions Lys189–Gln191 are interaction with tRNA. Cys239 serves as the catalytic Cysteine persulfide intermediate. An interaction with tRNA region spans residues Arg344–Tyr345.

Belongs to the MnmA/TRMU family.

It localises to the cytoplasm. It carries out the reaction S-sulfanyl-L-cysteinyl-[protein] + uridine(34) in tRNA + AH2 + ATP = 2-thiouridine(34) in tRNA + L-cysteinyl-[protein] + A + AMP + diphosphate + H(+). Functionally, catalyzes the 2-thiolation of uridine at the wobble position (U34) of tRNA, leading to the formation of s(2)U34. This chain is tRNA-specific 2-thiouridylase MnmA, found in Prochlorococcus marinus (strain NATL1A).